Here is a 156-residue protein sequence, read N- to C-terminus: Small ribosomal subunit protein uS7 (156 aa).

The protein belongs to the universal ribosomal protein uS7 family. Part of the 30S ribosomal subunit. Contacts proteins S9 and S11.

Its function is as follows. One of the primary rRNA binding proteins, it binds directly to 16S rRNA where it nucleates assembly of the head domain of the 30S subunit. Is located at the subunit interface close to the decoding center, probably blocks exit of the E-site tRNA. The sequence is that of Small ribosomal subunit protein uS7 from Janthinobacterium sp. (strain Marseille) (Minibacterium massiliensis).